We begin with the raw amino-acid sequence, 101 residues long: Small ribosomal subunit protein uS10 (101 aa).

The protein belongs to the universal ribosomal protein uS10 family. In terms of assembly, part of the 30S ribosomal subunit.

In terms of biological role, involved in the binding of tRNA to the ribosomes. In Mycobacterium bovis (strain ATCC BAA-935 / AF2122/97), this protein is Small ribosomal subunit protein uS10.